Here is a 298-residue protein sequence, read N- to C-terminus: Lipoyl synthase (298 aa).

[4Fe-4S] cluster is bound by residues cysteine 40, cysteine 45, cysteine 51, cysteine 67, cysteine 71, cysteine 74, and serine 280. Residues 53 to 269 (AVRKTATFMI…KEIALSKGFS (217 aa)) enclose the Radical SAM core domain.

The protein belongs to the radical SAM superfamily. Lipoyl synthase family. It depends on [4Fe-4S] cluster as a cofactor.

The protein localises to the cytoplasm. The enzyme catalyses [[Fe-S] cluster scaffold protein carrying a second [4Fe-4S](2+) cluster] + N(6)-octanoyl-L-lysyl-[protein] + 2 oxidized [2Fe-2S]-[ferredoxin] + 2 S-adenosyl-L-methionine + 4 H(+) = [[Fe-S] cluster scaffold protein] + N(6)-[(R)-dihydrolipoyl]-L-lysyl-[protein] + 4 Fe(3+) + 2 hydrogen sulfide + 2 5'-deoxyadenosine + 2 L-methionine + 2 reduced [2Fe-2S]-[ferredoxin]. It participates in protein modification; protein lipoylation via endogenous pathway; protein N(6)-(lipoyl)lysine from octanoyl-[acyl-carrier-protein]. Catalyzes the radical-mediated insertion of two sulfur atoms into the C-6 and C-8 positions of the octanoyl moiety bound to the lipoyl domains of lipoate-dependent enzymes, thereby converting the octanoylated domains into lipoylated derivatives. In Bacillus cytotoxicus (strain DSM 22905 / CIP 110041 / 391-98 / NVH 391-98), this protein is Lipoyl synthase.